We begin with the raw amino-acid sequence, 137 residues long: Bombinin-like peptides 1 (137 aa).

A signal peptide spans 1 to 18; sequence MNFKYIVAVSILIASAYA. The residue at position 70 (asparagine 70) is an Asparagine amide. The segment at 91 to 112 is disordered; it reads LDSFEHPEEASEKETRGFNQEE. Isoleucine 118 carries the D-allo-isoleucine modification. At isoleucine 136 the chain carries Isoleucine amide.

Belongs to the bombinin family. Expressed by the skin glands.

It is found in the secreted. Functionally, has antimicrobial activity, but no hemolytic activity. Preliminary evidence indicates that this peptide does not lyse and thus kill the bacteria by its antimicrobial activity. In terms of biological role, bombinin H has antibacterial and hemolytic activity. The polypeptide is Bombinin-like peptides 1 (Bombina variegata (Yellow-bellied toad)).